Here is a 456-residue protein sequence, read N- to C-terminus: Serine--tRNA ligase (456 aa).

Residue 252–254 (TSE) coordinates L-serine. Residues 283-285 (RKE) and Val299 each bind ATP. Glu306 lines the L-serine pocket. Residue 370 to 373 (ELVS) participates in ATP binding. Thr404 lines the L-serine pocket.

Belongs to the class-II aminoacyl-tRNA synthetase family. Type-1 seryl-tRNA synthetase subfamily. As to quaternary structure, homodimer. The tRNA molecule binds across the dimer.

Its subcellular location is the cytoplasm. The catalysed reaction is tRNA(Ser) + L-serine + ATP = L-seryl-tRNA(Ser) + AMP + diphosphate + H(+). It catalyses the reaction tRNA(Sec) + L-serine + ATP = L-seryl-tRNA(Sec) + AMP + diphosphate + H(+). It functions in the pathway aminoacyl-tRNA biosynthesis; selenocysteinyl-tRNA(Sec) biosynthesis; L-seryl-tRNA(Sec) from L-serine and tRNA(Sec): step 1/1. Catalyzes the attachment of serine to tRNA(Ser). Is also able to aminoacylate tRNA(Sec) with serine, to form the misacylated tRNA L-seryl-tRNA(Sec), which will be further converted into selenocysteinyl-tRNA(Sec). The sequence is that of Serine--tRNA ligase from Korarchaeum cryptofilum (strain OPF8).